Here is a 239-residue protein sequence, read N- to C-terminus: 1-(5-phosphoribosyl)-5-[(5-phosphoribosylamino)methylideneamino] imidazole-4-carboxamide isomerase (239 aa).

The active-site Proton acceptor is the D8. Catalysis depends on D129, which acts as the Proton donor.

It belongs to the HisA/HisF family.

It is found in the cytoplasm. The catalysed reaction is 1-(5-phospho-beta-D-ribosyl)-5-[(5-phospho-beta-D-ribosylamino)methylideneamino]imidazole-4-carboxamide = 5-[(5-phospho-1-deoxy-D-ribulos-1-ylimino)methylamino]-1-(5-phospho-beta-D-ribosyl)imidazole-4-carboxamide. It participates in amino-acid biosynthesis; L-histidine biosynthesis; L-histidine from 5-phospho-alpha-D-ribose 1-diphosphate: step 4/9. The polypeptide is 1-(5-phosphoribosyl)-5-[(5-phosphoribosylamino)methylideneamino] imidazole-4-carboxamide isomerase (Legionella pneumophila (strain Lens)).